The primary structure comprises 1284 residues: Collagen alpha-1(XX) chain (1284 aa).

The first 22 residues, 1 to 22, serve as a signal peptide directing secretion; sequence MSSGDPAHLGLCLWLWLGATLG. One can recognise a Fibronectin type-III 1 domain in the interval 28-119; it reads ASGLLRLAVL…EFVIEDLKSS (92 aa). Residues 122–171 are disordered; sequence DRSSQRPLGSGAPEPTPSHTGSPDPEQASEPQVAFTPSQDPRTPAGPQFR. One can recognise a VWFA domain in the interval 179-354; it reads DMVFLVDGSW…GALAGLLSRL (176 aa). Fibronectin type-III domains follow at residues 379 to 468, 469 to 559, 560 to 647, 649 to 738, and 743 to 833; these read APTS…APLP, PPRA…TLAP, PRHL…TKKA, SPSQ…TPST, and PPSN…ACPA. Residue N607 is glycosylated (N-linked (GlcNAc...) asparagine). One can recognise a Laminin G-like domain in the interval 842–1037; that stretch reads GFDLMVAFSL…LQMLQIVCSD (196 aa). Disordered stretches follow at residues 1065 to 1190 and 1212 to 1284; these read SCSS…EKGE and SFHE…GLWE. Over residues 1071–1082 the composition is skewed to pro residues; that stretch reads PGPPGPQGPPGL. Collagen-like domains lie at 1071–1127 and 1133–1190; these read PGPP…IPGR and PKGM…EKGE. 2 stretches are compositionally biased toward low complexity: residues 1112 to 1125 and 1166 to 1181; these read LPGL…QGIP and ERGP…LPGP. The segment covering 1271-1284 has biased composition (polar residues); it reads SPGQQGASTQGLWE.

In terms of tissue distribution, high expression in heart, lung, liver, skeletal muscle, kidney, pancreas, spleen, testis, ovary, subthalamic nucleus and fetal liver. Weak expression in other tissues tested.

It is found in the secreted. It localises to the extracellular space. Functionally, probable collagen protein. The polypeptide is Collagen alpha-1(XX) chain (COL20A1) (Homo sapiens (Human)).